Consider the following 20-residue polypeptide: Thrombin-like enzyme okinaxobin-2 (20 aa).

In terms of domain architecture, Peptidase S1 spans 1–20 (VVGGDECNINEHRFLVALYY).

The protein belongs to the peptidase S1 family. Snake venom subfamily. In terms of assembly, monomer. In terms of processing, glycosylated. Expressed by the venom gland.

The protein localises to the secreted. Its activity is regulated as follows. Strongly inactivated by diisopropylfluorophosphate (DFP) and to a lesser extent by tosyl-L-lysine chloromethyl ketone (TLCK). Its function is as follows. Thrombin-like snake venom serine protease. Releases both fibrinopeptides A and B from fibrinogen (FGA and FGB) to form fibrin clots. This chain is Thrombin-like enzyme okinaxobin-2, found in Ovophis okinavensis (Ryukyu Island pit viper).